The sequence spans 147 residues: Hemoglobin subunit beta-1 (147 aa).

One can recognise a Globin domain in the interval 3–147 (KWSKTELTII…VVSALGKQYH (145 aa)). Heme b-binding residues include His-64 and His-93.

The protein belongs to the globin family. Hb1 is a heterotetramer of two alpha chains and two beta-1 chains. As to expression, red blood cells.

Involved in oxygen transport from gills to the various peripheral tissues. This is Hemoglobin subunit beta-1 (hbb1) from Cygnodraco mawsoni (Antarctic dragonfish).